The primary structure comprises 77 residues: Neurexophilin-4 (77 aa).

Positions 1–77 (NCHVEYEKTN…NFQSEHPYFG (77 aa)) are v (Cys-rich).

This sequence belongs to the neurexophilin family. May be proteolytically processed at the boundary between the N-terminal non-conserved and the central conserved domain in neuron-like cells.

It is found in the secreted. Its function is as follows. May be signaling molecules that resemble neuropeptides and that act by binding to alpha-neurexins and possibly other receptors. This is Neurexophilin-4 (NXPH4) from Macaca mulatta (Rhesus macaque).